Here is a 304-residue protein sequence, read N- to C-terminus: Dihydroorotate dehydrogenase B (NAD(+)), catalytic subunit (304 aa).

FMN is bound by residues S21 and 45–46 (KA). Residues K45 and 69–73 (NAIGL) each bind substrate. Residues N99 and N127 each coordinate FMN. Residue N127 participates in substrate binding. C130 functions as the Nucleophile in the catalytic mechanism. Positions 165 and 191 each coordinate FMN. Substrate is bound at residue 192–193 (NT). FMN is bound by residues G217, 243 to 244 (GG), and 265 to 266 (GT).

This sequence belongs to the dihydroorotate dehydrogenase family. Type 1 subfamily. As to quaternary structure, heterotetramer of 2 PyrK and 2 PyrD type B subunits. It depends on FMN as a cofactor.

The protein localises to the cytoplasm. It catalyses the reaction (S)-dihydroorotate + NAD(+) = orotate + NADH + H(+). It functions in the pathway pyrimidine metabolism; UMP biosynthesis via de novo pathway; orotate from (S)-dihydroorotate (NAD(+) route): step 1/1. Its function is as follows. Catalyzes the conversion of dihydroorotate to orotate with NAD(+) as electron acceptor. The chain is Dihydroorotate dehydrogenase B (NAD(+)), catalytic subunit (pyrD) from Listeria monocytogenes serotype 4b (strain F2365).